A 287-amino-acid chain; its full sequence is Eukaryotic translation initiation factor 3 subunit G (287 aa).

Disordered regions lie at residues 1 to 34 and 159 to 184; these read MSKL…KDGT and TAGG…YVPP. Positions 207–285 constitute an RRM domain; that stretch reads ATLRVTNVSE…LILRVEFAKR (79 aa).

Belongs to the eIF-3 subunit G family. Component of the eukaryotic translation initiation factor 3 (eIF-3) complex.

The protein resides in the cytoplasm. RNA-binding component of the eukaryotic translation initiation factor 3 (eIF-3) complex, which is involved in protein synthesis of a specialized repertoire of mRNAs and, together with other initiation factors, stimulates binding of mRNA and methionyl-tRNAi to the 40S ribosome. The eIF-3 complex specifically targets and initiates translation of a subset of mRNAs involved in cell proliferation. This subunit can bind 18S rRNA. This Aspergillus oryzae (strain ATCC 42149 / RIB 40) (Yellow koji mold) protein is Eukaryotic translation initiation factor 3 subunit G (tif35).